We begin with the raw amino-acid sequence, 150 residues long: Small heat shock protein IbpB (150 aa).

The 112-residue stretch at 26–137 (SQEPIDFPPY…QPQRIAIGGG (112 aa)) folds into the sHSP domain.

The protein belongs to the small heat shock protein (HSP20) family. Homodimer. Forms homomultimers of about 100-150 subunits at optimal growth temperatures. Conformation changes to oligomers at high temperatures or high ionic concentrations. The decrease in size of the multimers is accompanied by an increase in chaperone activity.

The protein localises to the cytoplasm. Its function is as follows. Associates with aggregated proteins, together with IbpA, to stabilize and protect them from irreversible denaturation and extensive proteolysis during heat shock and oxidative stress. Aggregated proteins bound to the IbpAB complex are more efficiently refolded and reactivated by the ATP-dependent chaperone systems ClpB and DnaK/DnaJ/GrpE. Its activity is ATP-independent. In Pectobacterium atrosepticum (strain SCRI 1043 / ATCC BAA-672) (Erwinia carotovora subsp. atroseptica), this protein is Small heat shock protein IbpB.